We begin with the raw amino-acid sequence, 22 residues long: Piscidin-3 (22 aa).

Glycine 22 carries the glycine amide modification.

The protein belongs to the pleurocidin family. Mast cells in gill, skin and gut, and in lining blood vessels in the viscera.

It localises to the secreted. It is found in the membrane. Its function is as follows. Antimicrobial peptide with broad-spectrum activity against Gram-positive and Gram-negative bacteria. Rapidly inactivates both channel catfish herpesvirus (ED(50)=11 uM) and frog virus 3 (ED(50)=16 uM) over a wide temperature range. Has hemolytic activity. In Morone chrysops x Morone saxatilis (White bass x Striped bass), this protein is Piscidin-3.